Reading from the N-terminus, the 126-residue chain is Large ribosomal subunit protein bL17 (126 aa).

This sequence belongs to the bacterial ribosomal protein bL17 family. In terms of assembly, part of the 50S ribosomal subunit. Contacts protein L32.

The chain is Large ribosomal subunit protein bL17 from Lawsonia intracellularis (strain PHE/MN1-00).